A 606-amino-acid polypeptide reads, in one-letter code: Putative auxin response factor 21 (606 aa).

A DNA-binding region (TF-B3) is located at residues 126–228; that stretch reads FTKVLTASDT…ELRVGIRRAR (103 aa). The 82-residue stretch at 511–592 folds into the PB1 domain; sequence RTCTKVQMQG…MVKKILIYSK (82 aa).

This sequence belongs to the ARF family. As to quaternary structure, homodimers and heterodimers.

It localises to the nucleus. In terms of biological role, auxin response factors (ARFs) are transcriptional factors that bind specifically to the DNA sequence 5'-TGTCTC-3' found in the auxin-responsive promoter elements (AuxREs). Could act as transcriptional activator or repressor. Formation of heterodimers with Aux/IAA proteins may alter their ability to modulate early auxin response genes expression. The sequence is that of Putative auxin response factor 21 (ARF21) from Arabidopsis thaliana (Mouse-ear cress).